Consider the following 226-residue polypeptide: ATP-dependent dethiobiotin synthetase BioD (226 aa).

12-17 is a binding site for ATP; sequence GVGKTV. Position 16 (T16) interacts with Mg(2+). K37 is an active-site residue. A substrate-binding site is contributed by T41. ATP is bound by residues D49, 108-111, 169-170, and 197-199; these read EGAG, GS, and PAG. D49 and E108 together coordinate Mg(2+).

This sequence belongs to the dethiobiotin synthetase family. Homodimer. Mg(2+) is required as a cofactor.

The protein localises to the cytoplasm. The enzyme catalyses (7R,8S)-7,8-diammoniononanoate + CO2 + ATP = (4R,5S)-dethiobiotin + ADP + phosphate + 3 H(+). It participates in cofactor biosynthesis; biotin biosynthesis; biotin from 7,8-diaminononanoate: step 1/2. Functionally, catalyzes a mechanistically unusual reaction, the ATP-dependent insertion of CO2 between the N7 and N8 nitrogen atoms of 7,8-diaminopelargonic acid (DAPA, also called 7,8-diammoniononanoate) to form a ureido ring. The sequence is that of ATP-dependent dethiobiotin synthetase BioD from Mycobacterium bovis (strain ATCC BAA-935 / AF2122/97).